We begin with the raw amino-acid sequence, 690 residues long: Guanylate cyclase soluble subunit alpha-1 (690 aa).

Ser266 is subject to Phosphoserine. The region spanning 480 to 607 (TMLFSDIVGF…NNVTLANKFE (128 aa)) is the Guanylate cyclase domain.

Belongs to the adenylyl cyclase class-4/guanylyl cyclase family. As to quaternary structure, the active enzyme is formed by a heterodimer of an alpha and a beta subunit. Heterodimer with GUCY1B1. The cofactor is Mg(2+). Mn(2+) is required as a cofactor.

It localises to the cytoplasm. The enzyme catalyses GTP = 3',5'-cyclic GMP + diphosphate. With respect to regulation, activated by nitric oxide in the presence of magnesium or manganese ions. The chain is Guanylate cyclase soluble subunit alpha-1 (Gucy1a1) from Rattus norvegicus (Rat).